The sequence spans 372 residues: 4-hydroxy-3-methylbut-2-en-1-yl diphosphate synthase (flavodoxin) (372 aa).

[4Fe-4S] cluster is bound by residues Cys270, Cys273, Cys305, and Glu312.

The protein belongs to the IspG family. [4Fe-4S] cluster serves as cofactor.

It carries out the reaction (2E)-4-hydroxy-3-methylbut-2-enyl diphosphate + oxidized [flavodoxin] + H2O + 2 H(+) = 2-C-methyl-D-erythritol 2,4-cyclic diphosphate + reduced [flavodoxin]. It participates in isoprenoid biosynthesis; isopentenyl diphosphate biosynthesis via DXP pathway; isopentenyl diphosphate from 1-deoxy-D-xylulose 5-phosphate: step 5/6. In terms of biological role, converts 2C-methyl-D-erythritol 2,4-cyclodiphosphate (ME-2,4cPP) into 1-hydroxy-2-methyl-2-(E)-butenyl 4-diphosphate. This Alteromonas mediterranea (strain DSM 17117 / CIP 110805 / LMG 28347 / Deep ecotype) protein is 4-hydroxy-3-methylbut-2-en-1-yl diphosphate synthase (flavodoxin).